The primary structure comprises 797 residues: Sodium/hydrogen exchanger 4 (797 aa).

Residues 1 to 13 (MGPAMFMAFRLWN) lie on the Cytoplasmic side of the membrane. An intramembrane region (name=A/M1) is located at residues 14 to 28 (WLLLLAVLTRSEATS). The Cytoplasmic segment spans residues 29 to 69 (YVNESSNPTAQQAPDARFAASSSDPDEGISVFELDYDYVQI). Positions 32-52 (ESSNPTAQQAPDARFAASSSD) are disordered. The segment at residues 70–90 (PYEVTLWILLASLAKIGFHLY) is an intramembrane region (name=B/M2). Over 91-94 (HRLP) the chain is Cytoplasmic. The chain crosses the membrane as a helical span at residues 95–114 (HLMPESCLLIIVGALVGGII). Residues 115 to 127 (FGTHHKSPPVMDS) lie on the Extracellular side of the membrane. Residues 128-148 (SIYFLYLLPPIVLESGYFMPT) traverse the membrane as a helical segment. The Cytoplasmic segment spans residues 149-154 (RPFFEN). Residues 155–175 (IGSILWWAGLGALINAFGIGL) traverse the membrane as a helical segment. Over 176 to 194 (SLYFICQIKAFGLGDINLL) the chain is Extracellular. Residues 195 to 215 (HNLLFGSLISAVDPVAVLAVF) form a helical membrane-spanning segment. At 216 to 226 (EEARVNEQLYM) the chain is on the cytoplasmic side. The helical transmembrane segment at 227-247 (MIFGEALLNDGISVVLYNILI) threads the bilayer. At 248 to 270 (AFTKMHKFEDIEAVDILAGCARF) the chain is on the extracellular side. The chain crosses the membrane as a helical span at residues 271-291 (VIVGCGGVFFGIIFGFISAFI). At 292-304 (TRFTQNISAIEPL) the chain is on the cytoplasmic side. A helical membrane pass occupies residues 305 to 325 (IVFMFSYLSYLAAETLYLSGI). The Extracellular portion of the chain corresponds to 326–352 (LAITACAVTMKKYVEENVSQTSYTTIK). Residue Asn342 is glycosylated (N-linked (GlcNAc...) asparagine). Residues 353–373 (YFMKMLSSVSETLIFIFMGVS) traverse the membrane as a helical segment. Residues 374-384 (TIGKNHEWNWA) are Cytoplasmic-facing. A helical membrane pass occupies residues 385–405 (FICFTLLFCQIWRAISVFTLF). The Extracellular portion of the chain corresponds to 406 to 420 (YVSNQFRTFPFSIKD). An intramembrane region (name=L) is located at residues 421–441 (QFIIFYSGVRGAGSFSLAFLL). Topologically, residues 442–450 (PLSLFPRKK) are extracellular. Residues 451-471 (LFVTATLVVTYFTVFFQGITI) traverse the membrane as a helical segment. The Cytoplasmic segment spans residues 472-797 (GPLVRYLDVR…KSHSPLLHRK (326 aa)). Positions 759 to 769 (YDSGEQTEEET) are enriched in acidic residues. The segment at 759–797 (YDSGEQTEEETSAILSRWTAEHRHSTEHHKSHSPLLHRK) is disordered. Basic residues predominate over residues 783–797 (STEHHKSHSPLLHRK).

The protein belongs to the monovalent cation:proton antiporter 1 (CPA1) transporter (TC 2.A.36) family. In terms of assembly, homodimer; each protomer has one site for sodium and one site for proton binding. Interacts with CHP1 and CHP2. Post-translationally, may be phosphorylated. In terms of tissue distribution, expressed in kidney. Expressed in uterus and endometrial epithelial cells. Expressed in the inner segments of inner medullary collecting ducts (IMCD) in kidney. Expressed in AGTR1-positive neurons in organum vasculosum of the lamina terminalis (at protein level).

The protein localises to the basolateral cell membrane. Its subcellular location is the apical cell membrane. It is found in the zymogen granule membrane. The enzyme catalyses Na(+)(in) + H(+)(out) = Na(+)(out) + H(+)(in). The catalysed reaction is Na(+)(out) + NH4(+)(in) = Na(+)(in) + NH4(+)(out). With respect to regulation, up-regulated in response to high extracellular sodium concentration. Its function is as follows. Electroneutral antiporter that exchanges sodium for protons or ammonium ions at the basolateral membrane of epithelia to regulate cell volume and intracellular pH upon hypertonic conditions. As part of transcellular ammonia transport in renal tubules, mediates basolateral ammonium extrusion in the medullary thick ascending limb, regulating the corticopapillary ammonium gradient and overall renal acid excretion. Mediates sodium:proton exchange in gastric parietal cells secondary to cAMP-dependent acid secretion and hyperosmolarity. Possibly coupled to chloride:bicarbonate antiporter, enables loading of parietal cells with sodium and chloride ions to maintain cell volume and normal gastric acid secretion. Functions as a sodium sensor in neurons of organum vasculosum of the lamina terminalis where it regulates water intake in response to increased sodium concentration in body fluids. This Mus musculus (Mouse) protein is Sodium/hydrogen exchanger 4 (Slc9a4).